We begin with the raw amino-acid sequence, 172 residues long: Small ribosomal subunit protein uS5 (172 aa).

Residues 16–79 (LKDRLVAINR…EAAKKNLIRV (64 aa)) form the S5 DRBM domain.

The protein belongs to the universal ribosomal protein uS5 family. In terms of assembly, part of the 30S ribosomal subunit. Contacts proteins S4 and S8.

With S4 and S12 plays an important role in translational accuracy. Its function is as follows. Located at the back of the 30S subunit body where it stabilizes the conformation of the head with respect to the body. This is Small ribosomal subunit protein uS5 from Porphyromonas gingivalis (strain ATCC BAA-308 / W83).